We begin with the raw amino-acid sequence, 246 residues long: DNA polymerase sliding clamp (246 aa).

The protein belongs to the PCNA family. As to quaternary structure, homotrimer. The subunits circularize to form a toroid; DNA passes through its center. Replication factor C (RFC) is required to load the toroid on the DNA.

Sliding clamp subunit that acts as a moving platform for DNA processing. Responsible for tethering the catalytic subunit of DNA polymerase and other proteins to DNA during high-speed replication. The chain is DNA polymerase sliding clamp from Thermoplasma volcanium (strain ATCC 51530 / DSM 4299 / JCM 9571 / NBRC 15438 / GSS1).